The primary structure comprises 220 residues: Deoxyribose-phosphate aldolase (220 aa).

Aspartate 89 acts as the Proton donor/acceptor in catalysis. The Schiff-base intermediate with acetaldehyde role is filled by lysine 151. The active-site Proton donor/acceptor is the lysine 180.

This sequence belongs to the DeoC/FbaB aldolase family. DeoC type 1 subfamily.

It localises to the cytoplasm. It catalyses the reaction 2-deoxy-D-ribose 5-phosphate = D-glyceraldehyde 3-phosphate + acetaldehyde. It functions in the pathway carbohydrate degradation; 2-deoxy-D-ribose 1-phosphate degradation; D-glyceraldehyde 3-phosphate and acetaldehyde from 2-deoxy-alpha-D-ribose 1-phosphate: step 2/2. Catalyzes a reversible aldol reaction between acetaldehyde and D-glyceraldehyde 3-phosphate to generate 2-deoxy-D-ribose 5-phosphate. The sequence is that of Deoxyribose-phosphate aldolase from Streptococcus pneumoniae (strain CGSP14).